We begin with the raw amino-acid sequence, 275 residues long: Dermonecrotic toxin LamSicTox-alphaIV1i (275 aa).

Residue His5 is part of the active site. Mg(2+)-binding residues include Glu25 and Asp27. His41 serves as the catalytic Nucleophile. 2 disulfide bridges follow: Cys45–Cys51 and Cys47–Cys192. Asp85 contacts Mg(2+).

Belongs to the arthropod phospholipase D family. Class II subfamily. The cofactor is Mg(2+). Expressed by the venom gland.

Its subcellular location is the secreted. It catalyses the reaction an N-(acyl)-sphingosylphosphocholine = an N-(acyl)-sphingosyl-1,3-cyclic phosphate + choline. The enzyme catalyses an N-(acyl)-sphingosylphosphoethanolamine = an N-(acyl)-sphingosyl-1,3-cyclic phosphate + ethanolamine. It carries out the reaction a 1-acyl-sn-glycero-3-phosphocholine = a 1-acyl-sn-glycero-2,3-cyclic phosphate + choline. The catalysed reaction is a 1-acyl-sn-glycero-3-phosphoethanolamine = a 1-acyl-sn-glycero-2,3-cyclic phosphate + ethanolamine. In terms of biological role, dermonecrotic toxins cleave the phosphodiester linkage between the phosphate and headgroup of certain phospholipids (sphingolipid and lysolipid substrates), forming an alcohol (often choline) and a cyclic phosphate. This toxin acts on sphingomyelin (SM). It may also act on ceramide phosphoethanolamine (CPE), lysophosphatidylcholine (LPC) and lysophosphatidylethanolamine (LPE), but not on lysophosphatidylserine (LPS), and lysophosphatidylglycerol (LPG). It acts by transphosphatidylation, releasing exclusively cyclic phosphate products as second products. Induces dermonecrosis, hemolysis, increased vascular permeability, edema, inflammatory response, and platelet aggregation. This is Dermonecrotic toxin LamSicTox-alphaIV1i from Loxosceles amazonica (Recluse spider).